The primary structure comprises 245 residues: NAD-dependent protein deacylase 1 (245 aa).

The 243-residue stretch at 1–243 folds into the Deacetylase sirtuin-type domain; it reads MDEKLLKTIA…DELVRHVRKA (243 aa). An NAD(+)-binding site is contributed by 20 to 39; that stretch reads GAGVSAESGIPTFRGKDGLW. Residues Tyr-64 and Arg-67 each coordinate substrate. An NAD(+)-binding site is contributed by 98-101; that stretch reads QNVD. The active-site Proton acceptor is His-116. Positions 124, 127, 145, and 148 each coordinate Zn(2+). Residues 185-187, 211-213, and Ala-229 contribute to the NAD(+) site; these read GTS and NPD.

This sequence belongs to the sirtuin family. Class III subfamily. Requires Zn(2+) as cofactor.

Its subcellular location is the cytoplasm. The catalysed reaction is N(6)-acetyl-L-lysyl-[protein] + NAD(+) + H2O = 2''-O-acetyl-ADP-D-ribose + nicotinamide + L-lysyl-[protein]. It catalyses the reaction N(6)-succinyl-L-lysyl-[protein] + NAD(+) + H2O = 2''-O-succinyl-ADP-D-ribose + nicotinamide + L-lysyl-[protein]. NAD-dependent lysine deacetylase and desuccinylase that specifically removes acetyl and succinyl groups on target proteins. Modulates the activities of several proteins which are inactive in their acylated form. Deacetylates the N-terminal lysine residue of Alba, the major archaeal chromatin protein and that, in turn, increases Alba's DNA binding affinity, thereby repressing transcription. This Archaeoglobus fulgidus (strain ATCC 49558 / DSM 4304 / JCM 9628 / NBRC 100126 / VC-16) protein is NAD-dependent protein deacylase 1.